The sequence spans 453 residues: tRNA modification GTPase MnmE (453 aa).

(6S)-5-formyl-5,6,7,8-tetrahydrofolate-binding residues include R22, E79, and K119. Residues 215-376 (GMKVVIAGRP…LQQHLKSLMG (162 aa)) enclose the TrmE-type G domain. Residue N225 participates in K(+) binding. GTP-binding positions include 225-230 (NAGKSS), 244-250 (TEIAGTT), 269-272 (DTAG), and 334-337 (NKAD). Residue S229 participates in Mg(2+) binding. Residues T244, I246, and T249 each contribute to the K(+) site. Position 250 (T250) interacts with Mg(2+). K453 serves as a coordination point for (6S)-5-formyl-5,6,7,8-tetrahydrofolate.

The protein belongs to the TRAFAC class TrmE-Era-EngA-EngB-Septin-like GTPase superfamily. TrmE GTPase family. In terms of assembly, homodimer. Heterotetramer of two MnmE and two MnmG subunits. Requires K(+) as cofactor.

Its subcellular location is the cytoplasm. Functionally, exhibits a very high intrinsic GTPase hydrolysis rate. Involved in the addition of a carboxymethylaminomethyl (cmnm) group at the wobble position (U34) of certain tRNAs, forming tRNA-cmnm(5)s(2)U34. The polypeptide is tRNA modification GTPase MnmE (Shewanella sediminis (strain HAW-EB3)).